We begin with the raw amino-acid sequence, 211 residues long: MNRLIVLFLIVTMICATIAVPSREELEDQKEYKRSAALAGTIIEGASLGFQILDKVLGELGKVSRKIAVGVDNESGGSWTALNAYFRSGTTDVILPEFVPNQKALLYSGRKDTGPVATGAVAAFAYYMSNGHTLGVMFSVPFDYNFYSNWWDVKVYSGKRRADQGMYEDMYYGNPYRGDNGWHQKNLGYGLRMKGIMTSAGEAILQIRISR.

The N-terminal stretch at 1-19 (MNRLIVLFLIVTMICATIA) is a signal peptide. Positions 20–34 (VPSREELEDQKEYKR) are excised as a propeptide. The plays an important role in the hemolytic activity stretch occupies residues 37 to 46 (ALAGTIIEGA). Residues 45–64 (GASLGFQILDKVLGELGKVS) are N-terminal region. The phosphocholine site is built by serine 88, valine 121, serine 139, proline 141, tyrosine 167, tyrosine 171, and tyrosine 172. Residues 139-154 (SVPFDYNFYSNWWDVK) are trp-rich region, which is important for the binding to lipid membrane. Positions 177–179 (RGD) match the Cell attachment site, crucial for protein stability motif.

Belongs to the actinoporin family. Sea anemone subfamily. As to quaternary structure, octamer or nonamer in membranes. Monomer in the soluble state.

The protein localises to the secreted. The protein resides in the nematocyst. It is found in the target cell membrane. Functionally, pore-forming protein that forms cations-selective hydrophilic pores of around 1 nm and causes cardiac stimulation and cytolysis. Pore formation is a multi-step process that involves specific recognition of membrane sphingomyelin (but neither cholesterol nor phosphatidylcholine) using aromatic rich region and adjacent phosphocholine (POC) binding site, firm binding to the membrane (mainly driven by hydrophobic interactions) accompanied by the transfer of the N-terminal region to the lipid-water interface and finally pore formation after oligomerization of monomers. The polypeptide is DELTA-stichotoxin-Hmg2a (Heteractis magnifica (Magnificent sea anemone)).